The primary structure comprises 127 residues: Large ribosomal subunit protein eL24 (127 aa).

The tract at residues 93–127 (KRAQKPEVKQAAAEQAKREIKEKKKAAAKKAAPKK) is disordered. Residues 115–127 (KKKAAAKKAAPKK) show a composition bias toward basic residues.

The protein belongs to the eukaryotic ribosomal protein eL24 family.

This chain is Large ribosomal subunit protein eL24 (rpl24), found in Dictyostelium discoideum (Social amoeba).